Reading from the N-terminus, the 103-residue chain is Large ribosomal subunit protein bL21 (103 aa).

Belongs to the bacterial ribosomal protein bL21 family. Part of the 50S ribosomal subunit. Contacts protein L20.

This protein binds to 23S rRNA in the presence of protein L20. This Erwinia tasmaniensis (strain DSM 17950 / CFBP 7177 / CIP 109463 / NCPPB 4357 / Et1/99) protein is Large ribosomal subunit protein bL21.